A 473-amino-acid chain; its full sequence is Glycosyl hydrolase family 109 protein 2 (473 aa).

Residues 1-31 (MSIFSSRRQFLKSLGLAAGAAAAGNALPGKA) constitute a signal peptide (tat-type signal). NAD(+)-binding positions include 77–78 (GR), aspartate 99, 148–151 (WSSH), 168–169 (EV), and asparagine 197. Residues tyrosine 226, arginine 244, 256-259 (YPTH), and tyrosine 339 contribute to the substrate site. Tyrosine 256 is a binding site for NAD(+).

The protein belongs to the Gfo/Idh/MocA family. Glycosyl hydrolase 109 subfamily. The cofactor is NAD(+). In terms of processing, predicted to be exported by the Tat system. The position of the signal peptide cleavage has not been experimentally proven.

Its function is as follows. Glycosidase. This is Glycosyl hydrolase family 109 protein 2 from Akkermansia muciniphila (strain ATCC BAA-835 / DSM 22959 / JCM 33894 / BCRC 81048 / CCUG 64013 / CIP 107961 / Muc).